Here is a 122-residue protein sequence, read N- to C-terminus: Large ribosomal subunit protein uL14 (122 aa).

The protein belongs to the universal ribosomal protein uL14 family. Part of the 50S ribosomal subunit. Forms a cluster with proteins L3 and L19. In the 70S ribosome, L14 and L19 interact and together make contacts with the 16S rRNA in bridges B5 and B8.

Functionally, binds to 23S rRNA. Forms part of two intersubunit bridges in the 70S ribosome. The sequence is that of Large ribosomal subunit protein uL14 from Pseudoalteromonas translucida (strain TAC 125).